A 203-amino-acid polypeptide reads, in one-letter code: Small ribosomal subunit protein uS4c (203 aa).

The S4 RNA-binding domain maps to 92–150 (MRLDNIIYRLGMAPTIANARQLVNHGHIVVNDRIVTIPSYRCKPKDIISVRNNSTSRNV).

It belongs to the universal ribosomal protein uS4 family. In terms of assembly, part of the 30S ribosomal subunit. Contacts protein S5. The interaction surface between S4 and S5 is involved in control of translational fidelity.

It localises to the plastid. The protein localises to the chloroplast. Its function is as follows. One of the primary rRNA binding proteins, it binds directly to 16S rRNA where it nucleates assembly of the body of the 30S subunit. Functionally, with S5 and S12 plays an important role in translational accuracy. The polypeptide is Small ribosomal subunit protein uS4c (rps4) (Chlorokybus atmophyticus (Soil alga)).